Here is a 101-residue protein sequence, read N- to C-terminus: Urease subunit beta (101 aa).

It belongs to the urease beta subunit family. Heterotrimer of UreA (gamma), UreB (beta) and UreC (alpha) subunits. Three heterotrimers associate to form the active enzyme.

The protein localises to the cytoplasm. It carries out the reaction urea + 2 H2O + H(+) = hydrogencarbonate + 2 NH4(+). Its pathway is nitrogen metabolism; urea degradation; CO(2) and NH(3) from urea (urease route): step 1/1. The protein is Urease subunit beta of Sinorhizobium fredii (strain NBRC 101917 / NGR234).